The sequence spans 207 residues: Ribonuclease HII (207 aa).

An RNase H type-2 domain is found at 12–201 (DLVAGVDEVG…VRAAWEAREG (190 aa)). A divalent metal cation-binding residues include D18, E19, and D110.

The protein belongs to the RNase HII family. Requires Mn(2+) as cofactor. The cofactor is Mg(2+).

Its subcellular location is the cytoplasm. The enzyme catalyses Endonucleolytic cleavage to 5'-phosphomonoester.. Endonuclease that specifically degrades the RNA of RNA-DNA hybrids. This is Ribonuclease HII from Pseudomonas putida (strain W619).